The sequence spans 209 residues: Protein Sxy (209 aa).

The protein belongs to the Sxy/TfoX family.

In terms of biological role, induces low levels of natural DNA uptake by inducing transcription of the competence genes (the CRP-S regulon) required for DNA transformation. Induction of the CRP-S regulon also requires Sxy-activated promoter (CRP-S), cAMP receptor protein (CRP) and cAMP. Induces CRP-S site-containing genes which are involved in genome maintenance and transcription or encoding transposases and toxin-antitoxin pairs. This Escherichia coli (strain K12) protein is Protein Sxy.